The primary structure comprises 434 residues: Histidinol dehydrogenase (434 aa).

Residues Glu-260 and His-263 each coordinate Zn(2+). Active-site proton acceptor residues include Glu-330 and His-331. Zn(2+) is bound at residue His-423.

This sequence belongs to the histidinol dehydrogenase family. Zn(2+) is required as a cofactor.

It carries out the reaction L-histidinol + 2 NAD(+) + H2O = L-histidine + 2 NADH + 3 H(+). Its pathway is amino-acid biosynthesis; L-histidine biosynthesis; L-histidine from 5-phospho-alpha-D-ribose 1-diphosphate: step 9/9. In terms of biological role, catalyzes the sequential NAD-dependent oxidations of L-histidinol to L-histidinaldehyde and then to L-histidine. This Synechocystis sp. (strain ATCC 27184 / PCC 6803 / Kazusa) protein is Histidinol dehydrogenase (hisD).